The following is a 173-amino-acid chain: ATP-dependent protease subunit HslV (173 aa).

Thr-2 is an active-site residue. Na(+) is bound by residues Gly-158, Asp-161, and Ser-164.

The protein belongs to the peptidase T1B family. HslV subfamily. In terms of assembly, a double ring-shaped homohexamer of HslV is capped on each side by a ring-shaped HslU homohexamer. The assembly of the HslU/HslV complex is dependent on binding of ATP.

Its subcellular location is the cytoplasm. It carries out the reaction ATP-dependent cleavage of peptide bonds with broad specificity.. Its activity is regulated as follows. Allosterically activated by HslU binding. Its function is as follows. Protease subunit of a proteasome-like degradation complex believed to be a general protein degrading machinery. The sequence is that of ATP-dependent protease subunit HslV from Actinobacillus pleuropneumoniae serotype 5b (strain L20).